The sequence spans 499 residues: BTB/POZ domain-containing protein 16 (499 aa).

Residues I143 to L199 form the BTB domain.

In Bos taurus (Bovine), this protein is BTB/POZ domain-containing protein 16 (BTBD16).